Consider the following 989-residue polypeptide: Putative transcription elongation factor SPT5 homolog 2 (989 aa).

Residues 1 to 26 show a composition bias toward acidic residues; that stretch reads MSQYSDDDYSHEDDSEMEDEDEEDEY. The interval 1 to 82 is disordered; that stretch reads MSQYSDDDYS…VEDDDDDVDV (82 aa). Over residues 31–42 the composition is skewed to basic residues; it reads SRKGRSGKKRGR. Acidic residues predominate over residues 65–82; sequence WEVEVDDDVEDDDDDVDV. KOW domains are found at residues 260 to 287, 412 to 439, 464 to 491, 588 to 615, and 683 to 710; these read DLSRDSWVRMKLGIYKGDLAQVVDVDNV, HFMKGDAVIVIKGDLKNLKGWIEKVDEE, YFEPGNFVKVVSGIHEGGTGMIVKVDQH, VVAVKDVVRVIEGPSKGKQGPVVQIYKG, and DHLVGTYVKIRLGPFKGYSGRLVEVKDK. Residues 790-852 are disordered; the sequence is MSPPRDNWED…SPMTPSSTSY (63 aa). Residues 842 to 852 are compositionally biased toward low complexity; sequence PSPMTPSSTSY. In terms of domain architecture, KOW 6 spans 936-963; sequence CPKKNERVKILGGKYCGSTAKVIGEDGQ.

Belongs to the SPT5 family.

The protein localises to the nucleus. Its function is as follows. May regulate transcription elongation by RNA polymerase II. May enhance transcriptional pausing at sites proximal to the promoter, which may in turn facilitate the assembly of an elongation competent RNA polymerase II complex. In Arabidopsis thaliana (Mouse-ear cress), this protein is Putative transcription elongation factor SPT5 homolog 2.